The primary structure comprises 570 residues: Adenine deaminase (570 aa).

It belongs to the metallo-dependent hydrolases superfamily. Adenine deaminase family. Mn(2+) serves as cofactor.

The enzyme catalyses adenine + H2O + H(+) = hypoxanthine + NH4(+). The polypeptide is Adenine deaminase (Oleidesulfovibrio alaskensis (strain ATCC BAA-1058 / DSM 17464 / G20) (Desulfovibrio alaskensis)).